Here is a 290-residue protein sequence, read N- to C-terminus: MAKGKELKGRIRSTENTRKITRTMEMVATSKLKRATDRVAAARPYALALGEVLSHVYSPELADRFPLLRRPAAPRTVALVILTANRGLCGAFNANLIKEARSRIAELEAKGLTVELHVVGRKGVGFFRYVNRAIASQRTDITDKPSAADAASLIDGLMQRFAAGSIDAVYITYAKYLSALSAPPATEQVLPVAPPTAKAEGGVQHDFILAPSADAILEALLPLYVRNAVYRALVETEAGFQSAQRTAMKNATDNATELLQVLKRTYNSARQAQITQEIAEIVGGASALQG.

It belongs to the ATPase gamma chain family. As to quaternary structure, F-type ATPases have 2 components, CF(1) - the catalytic core - and CF(0) - the membrane proton channel. CF(1) has five subunits: alpha(3), beta(3), gamma(1), delta(1), epsilon(1). CF(0) has three main subunits: a, b and c.

It is found in the cell inner membrane. Its function is as follows. Produces ATP from ADP in the presence of a proton gradient across the membrane. The gamma chain is believed to be important in regulating ATPase activity and the flow of protons through the CF(0) complex. The protein is ATP synthase gamma chain of Gemmatimonas aurantiaca (strain DSM 14586 / JCM 11422 / NBRC 100505 / T-27).